Consider the following 418-residue polypeptide: Gamma-glutamyl phosphate reductase (418 aa).

This sequence belongs to the gamma-glutamyl phosphate reductase family.

The protein localises to the cytoplasm. It carries out the reaction L-glutamate 5-semialdehyde + phosphate + NADP(+) = L-glutamyl 5-phosphate + NADPH + H(+). Its pathway is amino-acid biosynthesis; L-proline biosynthesis; L-glutamate 5-semialdehyde from L-glutamate: step 2/2. In terms of biological role, catalyzes the NADPH-dependent reduction of L-glutamate 5-phosphate into L-glutamate 5-semialdehyde and phosphate. The product spontaneously undergoes cyclization to form 1-pyrroline-5-carboxylate. This chain is Gamma-glutamyl phosphate reductase, found in Geobacter sulfurreducens (strain ATCC 51573 / DSM 12127 / PCA).